Consider the following 128-residue polypeptide: Ribonuclease P protein component 4 (128 aa).

Zn(2+)-binding residues include C63, C66, C92, and C95.

This sequence belongs to the eukaryotic/archaeal RNase P protein component 4 family. In terms of assembly, consists of a catalytic RNA component and at least 4 protein subunits. Forms a subcomplex with Rnp1 which stimulates the catalytic RNA. Zn(2+) serves as cofactor.

Its subcellular location is the cytoplasm. The catalysed reaction is Endonucleolytic cleavage of RNA, removing 5'-extranucleotides from tRNA precursor.. Its function is as follows. Part of ribonuclease P, a protein complex that generates mature tRNA molecules by cleaving their 5'-ends. The protein is Ribonuclease P protein component 4 of Methanocaldococcus jannaschii (strain ATCC 43067 / DSM 2661 / JAL-1 / JCM 10045 / NBRC 100440) (Methanococcus jannaschii).